The primary structure comprises 480 residues: Probable GH family 25 lysozyme 3 (480 aa).

The N-terminal stretch at 1 to 20 (MNKLILSILSVLLIVSIASA) is a signal peptide. The 211-residue stretch at 21 to 231 (GNGIDISSGT…STTSSSATSS (211 aa)) folds into the Ch-type lysozyme domain. Active-site residues include D25, D114, and E116. Low complexity predominate over residues 219 to 472 (SGSSTTSSSA…SSGSGNYTSG (254 aa)). The interval 219 to 480 (SGSSTTSSSA…SGSGNGAFLF (262 aa)) is disordered. Residues N423, N428, N437, N446, and N468 are each glycosylated (N-linked (GlcNAc...) asparagine).

This sequence belongs to the glycosyl hydrolase 25 family.

Its subcellular location is the secreted. It catalyses the reaction Hydrolysis of (1-&gt;4)-beta-linkages between N-acetylmuramic acid and N-acetyl-D-glucosamine residues in a peptidoglycan and between N-acetyl-D-glucosamine residues in chitodextrins.. The sequence is that of Probable GH family 25 lysozyme 3 from Dictyostelium discoideum (Social amoeba).